The following is a 152-amino-acid chain: Xanthine-guanine phosphoribosyltransferase (152 aa).

Residues 37–38 (RG), Arg-69, and 88–96 (DDLVDTGGT) each bind 5-phospho-alpha-D-ribose 1-diphosphate. Residue Arg-69 coordinates GMP. A Mg(2+)-binding site is contributed by Asp-89. The guanine site is built by Asp-92 and Ile-135. 2 residues coordinate xanthine: Asp-92 and Ile-135. GMP is bound by residues 92-96 (DTGGT) and 134-135 (WI).

The protein belongs to the purine/pyrimidine phosphoribosyltransferase family. XGPT subfamily. In terms of assembly, homotetramer. Mg(2+) is required as a cofactor.

The protein resides in the cell inner membrane. The catalysed reaction is GMP + diphosphate = guanine + 5-phospho-alpha-D-ribose 1-diphosphate. The enzyme catalyses XMP + diphosphate = xanthine + 5-phospho-alpha-D-ribose 1-diphosphate. It catalyses the reaction IMP + diphosphate = hypoxanthine + 5-phospho-alpha-D-ribose 1-diphosphate. It participates in purine metabolism; GMP biosynthesis via salvage pathway; GMP from guanine: step 1/1. Its pathway is purine metabolism; XMP biosynthesis via salvage pathway; XMP from xanthine: step 1/1. Purine salvage pathway enzyme that catalyzes the transfer of the ribosyl-5-phosphate group from 5-phospho-alpha-D-ribose 1-diphosphate (PRPP) to the N9 position of the 6-oxopurines guanine and xanthine to form the corresponding ribonucleotides GMP (guanosine 5'-monophosphate) and XMP (xanthosine 5'-monophosphate), with the release of PPi. To a lesser extent, also acts on hypoxanthine. The chain is Xanthine-guanine phosphoribosyltransferase from Pectobacterium atrosepticum (strain SCRI 1043 / ATCC BAA-672) (Erwinia carotovora subsp. atroseptica).